The sequence spans 317 residues: Heme A synthase (317 aa).

At methionine 1 to lysine 6 the chain is on the cytoplasmic side. A helical transmembrane segment spans residues tryptophan 7–threonine 27. The Extracellular segment spans residues lysine 28–glutamine 54. A disulfide bridge connects residues cysteine 35 and cysteine 42. The chain crosses the membrane as a helical span at residues leucine 55–leucine 75. Glutamate 58 is an active-site residue. Histidine 61 contacts heme o. Topologically, residues cysteine 76–proline 91 are cytoplasmic. A helical transmembrane segment spans residues leucine 92–valine 112. Residues tryptophan 113 to histidine 123 lie on the Extracellular side of the membrane. Position 123 (histidine 123) interacts with heme o. Residues phenylalanine 124 to valine 144 form a helical membrane-spanning segment. The Cytoplasmic segment spans residues aspartate 145–methionine 159. A helical membrane pass occupies residues arginine 160 to valine 180. The Extracellular portion of the chain corresponds to arginine 181–arginine 214. A disulfide bridge links cysteine 189 with cysteine 195. Heme b is bound at residue histidine 213. The helical transmembrane segment at leucine 215–tyrosine 235 threads the bilayer. Residues arginine 236 to tyrosine 243 are Cytoplasmic-facing. A helical membrane pass occupies residues glycine 244–phenylalanine 264. The Extracellular portion of the chain corresponds to threonine 265–serine 272. The chain crosses the membrane as a helical span at residues leucine 273–alanine 293. Histidine 275 contributes to the heme b binding site. Topologically, residues leucine 294–lysine 317 are cytoplasmic.

This sequence belongs to the COX15/CtaA family. Type 1 subfamily. As to quaternary structure, interacts with CtaB. Requires heme b as cofactor.

It is found in the cell membrane. It carries out the reaction Fe(II)-heme o + 2 A + H2O = Fe(II)-heme a + 2 AH2. Its pathway is porphyrin-containing compound metabolism; heme A biosynthesis; heme A from heme O: step 1/1. Catalyzes the conversion of heme O to heme A by two successive hydroxylations of the methyl group at C8. The first hydroxylation forms heme I, the second hydroxylation results in an unstable dihydroxymethyl group, which spontaneously dehydrates, resulting in the formyl group of heme A. This chain is Heme A synthase, found in Geobacillus thermodenitrificans.